The chain runs to 165 residues: Methylated-DNA--protein-cysteine methyltransferase (165 aa).

Cys-126 (nucleophile; methyl group acceptor) is an active-site residue.

Belongs to the MGMT family.

Its subcellular location is the cytoplasm. It carries out the reaction a 6-O-methyl-2'-deoxyguanosine in DNA + L-cysteinyl-[protein] = S-methyl-L-cysteinyl-[protein] + a 2'-deoxyguanosine in DNA. The enzyme catalyses a 4-O-methyl-thymidine in DNA + L-cysteinyl-[protein] = a thymidine in DNA + S-methyl-L-cysteinyl-[protein]. Its function is as follows. Involved in the cellular defense against the biological effects of O6-methylguanine (O6-MeG) and O4-methylthymine (O4-MeT) in DNA. Repairs the methylated nucleobase in DNA by stoichiometrically transferring the methyl group to a cysteine residue in the enzyme. This is a suicide reaction: the enzyme is irreversibly inactivated. In Mycobacterium leprae (strain TN), this protein is Methylated-DNA--protein-cysteine methyltransferase.